The primary structure comprises 282 residues: Release factor glutamine methyltransferase (282 aa).

Residues 120–124 (GVGSG), Asp-143, and Asn-189 each bind S-adenosyl-L-methionine. Residue 189-192 (NPPY) coordinates substrate.

Belongs to the protein N5-glutamine methyltransferase family. PrmC subfamily.

The enzyme catalyses L-glutaminyl-[peptide chain release factor] + S-adenosyl-L-methionine = N(5)-methyl-L-glutaminyl-[peptide chain release factor] + S-adenosyl-L-homocysteine + H(+). Methylates the class 1 translation termination release factors RF1/PrfA and RF2/PrfB on the glutamine residue of the universally conserved GGQ motif. This is Release factor glutamine methyltransferase from Dictyoglomus turgidum (strain DSM 6724 / Z-1310).